The sequence spans 226 residues: Ribose-5-phosphate isomerase A (226 aa).

Substrate is bound by residues 26 to 29, 82 to 85, and 95 to 98; these read TGST, DGAD, and KGGG. E104 acts as the Proton acceptor in catalysis. A substrate-binding site is contributed by K122.

The protein belongs to the ribose 5-phosphate isomerase family. As to quaternary structure, homodimer.

The enzyme catalyses aldehydo-D-ribose 5-phosphate = D-ribulose 5-phosphate. It participates in carbohydrate degradation; pentose phosphate pathway; D-ribose 5-phosphate from D-ribulose 5-phosphate (non-oxidative stage): step 1/1. Catalyzes the reversible conversion of ribose-5-phosphate to ribulose 5-phosphate. The chain is Ribose-5-phosphate isomerase A from Streptococcus thermophilus (strain ATCC BAA-250 / LMG 18311).